An 880-amino-acid chain; its full sequence is uncharacterized protein (880 aa).

10 disordered regions span residues 101–149 (KPIP…LRSE), 191–224 (PETS…ISTH), 240–273 (TTTT…PILK), 294–350 (NSNS…STTS), 425–446 (QPDS…ESQP), 470–508 (STST…SSSS), 536–561 (MESS…NDNS), 580–613 (APQS…NDDE), 682–713 (NTNT…NINN), and 844–880 (NSSG…KSEI). The stretch at 113-147 (ISIKEKEKEKEKEKEKEKEKEKEKEKEMKSTINLR) forms a coiled coil. Residues 115 to 149 (IKEKEKEKEKEKEKEKEKEKEKEKEMKSTINLRSE) are compositionally biased toward basic and acidic residues. Composition is skewed to low complexity over residues 193 to 223 (TSTP…SIST) and 240 to 256 (TTTT…PSSS). Polar residues predominate over residues 257 to 271 (IAGITNPTSRSSSPI). A compositionally biased stretch (low complexity) spans 294–332 (NSNSSSGGGNNNNKSISTPSSPIISRPITNKINNNNNNN). The span at 333-342 (QPQLHYNQPQ) shows a compositional bias: polar residues. The span at 536 to 548 (MESSTTTTLLSEN) shows a compositional bias: low complexity. The span at 589–613 (QPEDDPFFDFEDLSDDDDSNDNDDE) shows a compositional bias: acidic residues. A compositionally biased stretch (low complexity) spans 844–864 (NSSGSGNNSNDNSGSSSPSSS). Polar residues predominate over residues 865-880 (KTNTLNQQSICIKSEI).

This is an uncharacterized protein from Dictyostelium discoideum (Social amoeba).